The sequence spans 415 residues: Ubp4-interactor sfp47 (415 aa).

2 positions are modified to phosphoserine: Ser-221 and Ser-226. Thr-231 is subject to Phosphothreonine. Ser-235 carries the phosphoserine modification. The SH3 domain maps to 352–415; sequence PIFAYVRALY…PSNYIEELEY (64 aa).

In terms of assembly, interacts with ubp4.

The protein resides in the cytoplasm. Its subcellular location is the endosome. Required for the regulation of activity and recruitment of ubp4 to endosomes. The protein is Ubp4-interactor sfp47 (sfp47) of Schizosaccharomyces pombe (strain 972 / ATCC 24843) (Fission yeast).